The following is a 611-amino-acid chain: Urease subunit alpha 2 (611 aa).

The region spanning 154-611 (GGIDSHIHFI…LPMAQRYFLF (458 aa)) is the Urease domain. Residues histidine 159, histidine 161, and lysine 242 each contribute to the Ni(2+) site. An N6-carboxylysine modification is found at lysine 242. Histidine 244 serves as a coordination point for substrate. The Ni(2+) site is built by histidine 271 and histidine 297. Histidine 345 (proton donor) is an active-site residue. Aspartate 385 provides a ligand contact to Ni(2+). The segment at 411–434 (GHLAPDQSAKTEQSLDNIMLSPTD) is disordered. Positions 418-434 (SAKTEQSLDNIMLSPTD) are enriched in polar residues.

This sequence belongs to the metallo-dependent hydrolases superfamily. Urease alpha subunit family. In terms of assembly, heterotrimer of UreA (gamma), UreB (beta) and UreC (alpha) subunits. Three heterotrimers associate to form the active enzyme. Ni cation serves as cofactor. Post-translationally, carboxylation allows a single lysine to coordinate two nickel ions.

The protein localises to the cytoplasm. It catalyses the reaction urea + 2 H2O + H(+) = hydrogencarbonate + 2 NH4(+). It participates in nitrogen metabolism; urea degradation; CO(2) and NH(3) from urea (urease route): step 1/1. The sequence is that of Urease subunit alpha 2 from Psychrobacter cryohalolentis (strain ATCC BAA-1226 / DSM 17306 / VKM B-2378 / K5).